The following is a 456-amino-acid chain: Chitin synthase regulatory factor 1 (456 aa).

3 disordered regions span residues 1–20 (MPAS…ALLV), 38–74 (ESPL…SLSS), and 139–158 (SKPS…SGSE). Residues 140 to 158 (KPSLSSNSSDSSFSKSGSE) are compositionally biased toward low complexity. Ser227 and Ser230 each carry phosphoserine. Sel1-like repeat units follow at residues 293–327 (NFVP…SLGH), 328–364 (DRSS…DKGN), 365–402 (ADAM…MLGH), and 403–438 (APAC…INDS).

Functionally, involved in chitin biosynthesis. The protein is Chitin synthase regulatory factor 1 (chr1) of Schizosaccharomyces pombe (strain 972 / ATCC 24843) (Fission yeast).